A 423-amino-acid chain; its full sequence is SH2 domain-containing protein 5 (423 aa).

A PID domain is found at A28–Y146. In terms of domain architecture, SH2 spans W296–Y392. The tract at residues Y392–G423 is disordered.

Interacts with BCR.

It is found in the postsynaptic density. Functionally, may be involved in synaptic plasticity regulation through the control of Rac-GTP levels. This is SH2 domain-containing protein 5 from Homo sapiens (Human).